The following is a 253-amino-acid chain: Cyclin-C1-1 (253 aa).

Belongs to the cyclin family. Cyclin C subfamily.

This chain is Cyclin-C1-1 (CYCC1-1), found in Arabidopsis thaliana (Mouse-ear cress).